Consider the following 232-residue polypeptide: Platelet-activating factor acetylhydrolase IB subunit alpha1 (232 aa).

A disordered region spans residues M1–G20. The residue at position 2 (S2) is an N-acetylserine. A Phosphoserine modification is found at S2. Active-site residues include S48, D193, and H196.

It belongs to the 'GDSL' lipolytic enzyme family. Platelet-activating factor acetylhydrolase IB beta/gamma subunits subfamily. In terms of assembly, forms a catalytic dimer which is either homodimer (alpha1/alpha1 homodimer) or heterodimer with PAFAH1B2 (alpha1/alpha2 heterodimer). Component of the cytosolic (PAF-AH (I)) heterotetrameric enzyme, which is composed of PAFAH1B1 (beta), PAFAH1B2 (alpha2) and PAFAH1B3 (alpha1) subunits. The catalytic activity of the enzyme resides in the alpha1 (PAFAH1B3) and alpha2 (PAFAH1B2) subunits, whereas the beta subunit (PAFAH1B1) has regulatory activity. Trimer formation is not essential for the catalytic activity. Interacts with VLDLR; this interaction may modulate the Reelin pathway. Expressed in brain, spleen, lung, liver, kidney and testis. Not expressed in heart and skeletal muscle. Expressed in fetal brain as heterodimer. Not expressed in adult tissues. Expressed exclusively in granule cells.

Its subcellular location is the cytoplasm. It carries out the reaction a 1-O-alkyl-2-acetyl-sn-glycero-3-phosphocholine + H2O = a 1-O-alkyl-sn-glycero-3-phosphocholine + acetate + H(+). It catalyses the reaction 1-O-hexadecyl-2-acetyl-sn-glycero-3-phosphocholine + H2O = 1-O-hexadecyl-sn-glycero-3-phosphocholine + acetate + H(+). The enzyme catalyses 1-O-hexadecyl-2-acetyl-sn-glycero-3-phosphate + H2O = 1-O-hexadecyl-sn-glycero-3-phosphate + acetate + H(+). Beta subunit (PAFAH1B1) inhibits the acetylhydrolase activity of the alpha1/alpha1 catalytic homodimer. Functionally, alpha1 catalytic subunit of the cytosolic type I platelet-activating factor (PAF) acetylhydrolase (PAF-AH (I)) heterotetrameric enzyme that catalyzes the hydrolyze of the acetyl group at the sn-2 position of PAF and its analogs and modulates the action of PAF. The activity and substrate specificity of PAF-AH (I) are affected by its subunit composition. Both alpha1/alpha1 homodimer (PAFAH1B3/PAFAH1B3 homodimer) and alpha1/alpha2 heterodimer(PAFAH1B3/PAFAH1B2 heterodimer) hydrolyze 1-O-alkyl-2-acetyl-sn-glycero-3-phosphoric acid (AAGPA) more efficiently than PAF, but they have little hydrolytic activity towards 1-O-alkyl-2-acetyl-sn-glycero-3-phosphorylethanolamine (AAGPE). Plays an important role during the development of brain. This chain is Platelet-activating factor acetylhydrolase IB subunit alpha1, found in Rattus norvegicus (Rat).